A 546-amino-acid chain; its full sequence is Putative serine/threonine-protein kinase L268 (546 aa).

In terms of domain architecture, Cyclin N-terminal spans 1-112; the sequence is MVCFSKYSGI…ILQTLDFHLV (112 aa). The Protein kinase domain maps to 260–544; it reads ITVVKNLGEG…QTLEEFNKFN (285 aa). ATP is bound by residues 266-274 and Lys287; that span reads LGEGTYGTV. Asp389 functions as the Proton acceptor in the catalytic mechanism.

This sequence belongs to the protein kinase superfamily. Ser/Thr protein kinase family.

The catalysed reaction is L-seryl-[protein] + ATP = O-phospho-L-seryl-[protein] + ADP + H(+). It carries out the reaction L-threonyl-[protein] + ATP = O-phospho-L-threonyl-[protein] + ADP + H(+). This chain is Putative serine/threonine-protein kinase L268, found in Acanthamoeba polyphaga mimivirus (APMV).